The following is a 257-amino-acid chain: Ribosomal RNA small subunit methyltransferase J (257 aa).

S-adenosyl-L-methionine-binding positions include 107 to 108, 123 to 124, and Asp-177; these read RD and ER.

Belongs to the methyltransferase superfamily. RsmJ family.

The protein localises to the cytoplasm. It carries out the reaction guanosine(1516) in 16S rRNA + S-adenosyl-L-methionine = N(2)-methylguanosine(1516) in 16S rRNA + S-adenosyl-L-homocysteine + H(+). In terms of biological role, specifically methylates the guanosine in position 1516 of 16S rRNA. In Haemophilus influenzae (strain ATCC 51907 / DSM 11121 / KW20 / Rd), this protein is Ribosomal RNA small subunit methyltransferase J.